We begin with the raw amino-acid sequence, 330 residues long: Small ribosomal subunit protein uS2 (330 aa).

It belongs to the universal ribosomal protein uS2 family.

This Bradyrhizobium sp. (strain BTAi1 / ATCC BAA-1182) protein is Small ribosomal subunit protein uS2.